We begin with the raw amino-acid sequence, 286 residues long: AB hydrolase superfamily protein YfhM (286 aa).

Residues 27–272 (PLIVLLHGFP…ASHWINHEKP (246 aa)) enclose the AB hydrolase-1 domain. D103 functions as the Nucleophile in the catalytic mechanism. The active-site Proton donor is Y210. H265 functions as the Proton acceptor in the catalytic mechanism.

The protein belongs to the AB hydrolase superfamily. Epoxide hydrolase family.

This chain is AB hydrolase superfamily protein YfhM (yfhM), found in Bacillus subtilis (strain 168).